Reading from the N-terminus, the 267-residue chain is Pro-opiomelanocortin (267 aa).

Residues 1-26 form the signal peptide; sequence MPRLCGSRSGALLLTLLLQASMGVRG. F87 carries the phenylalanine amide modification. Disordered stretches follow at residues 88 to 156 and 215 to 242; these read GRRN…RPVK and KKDEGPYKMEHFRWGSPPKDKRYGGFMT. Residue N91 is glycosylated (N-linked (GlcNAc...) asparagine). Residues 94–105 are compositionally biased toward gly residues; sequence SSGGGGGGGGAG. Residues 109–133 constitute a propeptide that is removed on maturation; that stretch reads EEEEVAAGEGPGPRGDGVAPGPRQD. The span at 131-143 shows a compositional bias: basic and acidic residues; the sequence is RQDKRSYSMEHFR. S136 carries the post-translational modification N-acetylserine; in Corticotropin. V148 carries the post-translational modification Valine amide. Residues 215–237 show a composition bias toward basic and acidic residues; the sequence is KKDEGPYKMEHFRWGSPPKDKRY.

This sequence belongs to the POMC family. Post-translationally, specific enzymatic cleavages at paired basic residues yield the different active peptides. In terms of tissue distribution, ACTH and MSH are produced by the pituitary gland.

The protein localises to the secreted. Its function is as follows. Stimulates the adrenal glands to release cortisol. Anorexigenic peptide. Increases the pigmentation of skin by increasing melanin production in melanocytes. Functionally, increases the pigmentation of skin by increasing melanin production in melanocytes. In terms of biological role, endogenous orexigenic opiate. Its function is as follows. Endogenous opiate. The polypeptide is Pro-opiomelanocortin (POMC) (Sus scrofa (Pig)).